The sequence spans 355 residues: S-adenosylmethionine:tRNA ribosyltransferase-isomerase (355 aa).

The protein belongs to the QueA family. Monomer.

Its subcellular location is the cytoplasm. It catalyses the reaction 7-aminomethyl-7-carbaguanosine(34) in tRNA + S-adenosyl-L-methionine = epoxyqueuosine(34) in tRNA + adenine + L-methionine + 2 H(+). It functions in the pathway tRNA modification; tRNA-queuosine biosynthesis. Its function is as follows. Transfers and isomerizes the ribose moiety from AdoMet to the 7-aminomethyl group of 7-deazaguanine (preQ1-tRNA) to give epoxyqueuosine (oQ-tRNA). The sequence is that of S-adenosylmethionine:tRNA ribosyltransferase-isomerase from Burkholderia orbicola (strain MC0-3).